The chain runs to 280 residues: 4-diphosphocytidyl-2-C-methyl-D-erythritol kinase (280 aa).

Residue Lys11 is part of the active site. An ATP-binding site is contributed by 95–105; the sequence is PVGAGLGGGSS. The active site involves Asp137.

The protein belongs to the GHMP kinase family. IspE subfamily.

The catalysed reaction is 4-CDP-2-C-methyl-D-erythritol + ATP = 4-CDP-2-C-methyl-D-erythritol 2-phosphate + ADP + H(+). It functions in the pathway isoprenoid biosynthesis; isopentenyl diphosphate biosynthesis via DXP pathway; isopentenyl diphosphate from 1-deoxy-D-xylulose 5-phosphate: step 3/6. In terms of biological role, catalyzes the phosphorylation of the position 2 hydroxy group of 4-diphosphocytidyl-2C-methyl-D-erythritol. The chain is 4-diphosphocytidyl-2-C-methyl-D-erythritol kinase from Citrifermentans bemidjiense (strain ATCC BAA-1014 / DSM 16622 / JCM 12645 / Bem) (Geobacter bemidjiensis).